The sequence spans 435 residues: Deoxybrevianamide E synthase (435 aa).

The tract at residues 1–28 (MTAPELRAPAGHPQEPPARSSPAQALSS) is disordered. Residue Glu96 participates in brevianamide F binding. Residues Arg110, Lys195, Tyr197, Lys265, Tyr267, Tyr354, Tyr419, and Tyr423 each coordinate dimethylallyl diphosphate.

It belongs to the tryptophan dimethylallyltransferase family. Monomer.

It catalyses the reaction brevianamide F + dimethylallyl diphosphate = deoxybrevianamide E + diphosphate. It functions in the pathway alkaloid biosynthesis. In terms of biological role, deoxybrevianamide E synthase; part of the gene cluster that mediates the biosynthesis of notoamide, a fungal indole alkaloid that belongs to a family of natural products containing a characteristic bicyclo[2.2.2]diazaoctane core. The first step of notoamide biosynthesis involves coupling of L-proline and L-tryptophan by the bimodular NRPS notE', to produce cyclo-L-tryptophan-L-proline called brevianamide F. The reverse prenyltransferase notF' then acts as a deoxybrevianamide E synthase and converts brevianamide F to deoxybrevianamide E via reverse prenylation at C-2 of the indole ring leading to the bicyclo[2.2.2]diazaoctane core. Deoxybrevianamide E is further hydroxylated at C-6 of the indole ring, likely catalyzed by the cytochrome P450 monooxygenase notG', to yield 6-hydroxy-deoxybrevianamide E. 6-hydroxy-deoxybrevianamide E is a specific substrate of the prenyltransferase notC' for normal prenylation at C-7 to produce 6-hydroxy-7-prenyl-deoxybrevianamide, also called notoamide S. As the proposed pivotal branching point in notoamide biosynthesis, notoamide S can be diverted to notoamide E through an oxidative pyran ring closure putatively catalyzed by either notH' cytochrome P450 monooxygenase or the notD' FAD-linked oxidoreductase. This step would be followed by an indole 2,3-epoxidation-initiated pinacol-like rearrangement catalyzed by the notB' FAD-dependent monooxygenase leading to the formation of notoamide C and notoamide D. On the other hand notoamide S is converted to notoamide T by notH' (or notD'), a bifunctional oxidase that also functions as the intramolecular Diels-Alderase responsible for generation of (-)-notoamide T. To generate antipodal (+)-notoaminide T, notH (or notD) in Aspergillus strain MF297-2 is expected to catalyze a Diels-Alder reaction leading to the opposite stereochemistry. The remaining oxidoreductase notD' (or notH') likely catalyzes the oxidative pyran ring formation to yield (-)-stephacidin A. The FAD-dependent monooxygenase notI' is highly similar to notB' and is predicted to catalyze a similar conversion from (-)-stephacidin A to (+)-notoamide B via the 2,3-epoxidation of (-)-stephacidin A followed by a pinacol-type rearrangement. Finally, it remains unclear which enzyme could be responsible for the final hydroxylation steps leading to notoamide A and sclerotiamide. The polypeptide is Deoxybrevianamide E synthase (Aspergillus versicolor).